A 305-amino-acid chain; its full sequence is Recombination-associated protein RdgC (305 aa).

The protein belongs to the RdgC family.

Its subcellular location is the cytoplasm. It localises to the nucleoid. May be involved in recombination. This chain is Recombination-associated protein RdgC, found in Sodalis glossinidius (strain morsitans).